Consider the following 145-residue polypeptide: uncharacterized protein (145 aa).

An N-terminal signal peptide occupies residues 1–23 (MSSSNLSSRKTRISAHFLDAAPA). A helical membrane pass occupies residues 123 to 140 (VLLLIIALVFLLFVAIFI).

The protein resides in the membrane. This is an uncharacterized protein from Archaeoglobus fulgidus (strain ATCC 49558 / DSM 4304 / JCM 9628 / NBRC 100126 / VC-16).